Consider the following 325-residue polypeptide: Acetyl-coenzyme A carboxylase carboxyl transferase subunit alpha (325 aa).

A CoA carboxyltransferase C-terminal domain is found at 35–292 (EIEKLEARLA…DRVLRRSLKQ (258 aa)).

Belongs to the AccA family. As to quaternary structure, acetyl-CoA carboxylase is a heterohexamer composed of biotin carboxyl carrier protein (AccB), biotin carboxylase (AccC) and two subunits each of ACCase subunit alpha (AccA) and ACCase subunit beta (AccD).

The protein localises to the cytoplasm. The catalysed reaction is N(6)-carboxybiotinyl-L-lysyl-[protein] + acetyl-CoA = N(6)-biotinyl-L-lysyl-[protein] + malonyl-CoA. Its pathway is lipid metabolism; malonyl-CoA biosynthesis; malonyl-CoA from acetyl-CoA: step 1/1. Its function is as follows. Component of the acetyl coenzyme A carboxylase (ACC) complex. First, biotin carboxylase catalyzes the carboxylation of biotin on its carrier protein (BCCP) and then the CO(2) group is transferred by the carboxyltransferase to acetyl-CoA to form malonyl-CoA. The polypeptide is Acetyl-coenzyme A carboxylase carboxyl transferase subunit alpha (Geobacillus kaustophilus (strain HTA426)).